Reading from the N-terminus, the 30-residue chain is Ornithine carbamoyltransferase, catabolic (30 aa).

Belongs to the aspartate/ornithine carbamoyltransferase superfamily. OTCase family.

The protein localises to the cytoplasm. The catalysed reaction is carbamoyl phosphate + L-ornithine = L-citrulline + phosphate + H(+). It functions in the pathway amino-acid degradation; L-arginine degradation via ADI pathway; carbamoyl phosphate from L-arginine: step 2/2. The protein is Ornithine carbamoyltransferase, catabolic (arcB) of Aeromonas caviae (Aeromonas punctata).